A 381-amino-acid chain; its full sequence is p55-v-Fos-transforming protein (381 aa).

One can recognise a bZIP domain in the interval 137 to 200 (EEKRRIRRER…EKLEFILAAH (64 aa)). The basic motif stretch occupies residues 139 to 159 (KRRIRRERNKMAAAKCRNRRR). The segment at 165-193 (LQAETDQLEDKKSALQTEIANLLKEKEKL) is leucine-zipper.

The protein belongs to the bZIP family. Fos subfamily.

Its subcellular location is the host nucleus. In Mus musculus (Mouse), this protein is p55-v-Fos-transforming protein (V-FOS).